Reading from the N-terminus, the 430-residue chain is Bystin (430 aa).

Basic residues-rich tracts occupy residues Met-1–Gly-12 and Pro-26–Glu-35. Disordered stretches follow at residues Met-1 to Val-45 and Met-65 to Tyr-113. Basic and acidic residues predominate over residues Tyr-68–Thr-78. The span at Arg-93–Asp-104 shows a compositional bias: acidic residues.

It belongs to the bystin family.

It localises to the nucleus. It is found in the nucleolus. In terms of biological role, required for processing of 20S pre-rRNA precursor and biogenesis of 40S ribosomal subunits. The polypeptide is Bystin (bysl) (Nematostella vectensis (Starlet sea anemone)).